Here is a 321-residue protein sequence, read N- to C-terminus: Sideroflexin-1-3 (321 aa).

Transmembrane regions (helical) follow at residues 101–121 (IITG…FWQW), 146–168 (LVTS…NHAV), 174–194 (LLGR…NIPC), 220–240 (AAVV…IPGM), and 266–286 (IQTL…CAFF).

This sequence belongs to the sideroflexin family.

Its subcellular location is the mitochondrion membrane. Functionally, mitochondrial amino-acid transporter that mediates transport of serine into mitochondria. This Drosophila melanogaster (Fruit fly) protein is Sideroflexin-1-3.